A 157-amino-acid polypeptide reads, in one-letter code: 6,7-dimethyl-8-ribityllumazine synthase (157 aa).

Residues phenylalanine 30, 64–66 (ALE), and 88–90 (CII) contribute to the 5-amino-6-(D-ribitylamino)uracil site. 93-94 (ET) contributes to the (2S)-2-hydroxy-3-oxobutyl phosphate binding site. Histidine 96 (proton donor) is an active-site residue. 5-amino-6-(D-ribitylamino)uracil is bound at residue asparagine 121. Arginine 135 contributes to the (2S)-2-hydroxy-3-oxobutyl phosphate binding site.

The protein belongs to the DMRL synthase family.

It catalyses the reaction (2S)-2-hydroxy-3-oxobutyl phosphate + 5-amino-6-(D-ribitylamino)uracil = 6,7-dimethyl-8-(1-D-ribityl)lumazine + phosphate + 2 H2O + H(+). The protein operates within cofactor biosynthesis; riboflavin biosynthesis; riboflavin from 2-hydroxy-3-oxobutyl phosphate and 5-amino-6-(D-ribitylamino)uracil: step 1/2. In terms of biological role, catalyzes the formation of 6,7-dimethyl-8-ribityllumazine by condensation of 5-amino-6-(D-ribitylamino)uracil with 3,4-dihydroxy-2-butanone 4-phosphate. This is the penultimate step in the biosynthesis of riboflavin. The protein is 6,7-dimethyl-8-ribityllumazine synthase of Albidiferax ferrireducens (strain ATCC BAA-621 / DSM 15236 / T118) (Rhodoferax ferrireducens).